A 187-amino-acid chain; its full sequence is Elongation factor P (187 aa).

Belongs to the elongation factor P family.

It is found in the cytoplasm. It functions in the pathway protein biosynthesis; polypeptide chain elongation. In terms of biological role, involved in peptide bond synthesis. Stimulates efficient translation and peptide-bond synthesis on native or reconstituted 70S ribosomes in vitro. Probably functions indirectly by altering the affinity of the ribosome for aminoacyl-tRNA, thus increasing their reactivity as acceptors for peptidyl transferase. The protein is Elongation factor P of Granulibacter bethesdensis (strain ATCC BAA-1260 / CGDNIH1).